We begin with the raw amino-acid sequence, 464 residues long: ERO1-like protein alpha (464 aa).

The signal sequence occupies residues 1 to 23; it reads MGRGWGLLVGLLGVVWLLRSGQG. 8 disulfide bridges follow: C35/C48, C37/C46, C85/C387, C94/C99, C94/C130, C99/C104, C207/C237, and C390/C393. A phosphoserine mark is found at S106, S142, and S144. Residues R186, T188, and W199 each coordinate FAD. Residues S248 and H251 each coordinate FAD. N-linked (GlcNAc...) asparagine glycosylation is present at N276. FAD is bound by residues R283 and R296. The N-linked (GlcNAc...) asparagine glycan is linked to N380.

This sequence belongs to the EROs family. Predominantly monomer. May function both as a monomer and a homodimer. Interacts with PDILT. Interacts with ERP44; the interaction results in retention of ERO1A in the endoplasmic reticulum. The cofactor is FAD. In terms of processing, N-glycosylated. The Cys-94/Cys-99 and Cys-390/Cys-393 disulfide bonds constitute the redox-active center. The Cys-94/Cys-99 disulfide bond may accept electron from P4HB and funnel them to the active site disulfide Cys-390/Cys-393. The regulatory Cys-99/Cys-104 disulfide bond stabilizes the other regulatory bond Cys-94/Cys-130. Post-translationally, phosphorylated on Ser-144 by FAM20C in the Golgi which increases its enzymatic activity. Phosphorylation is induced by lactation. It is also induced by hypoxia and reductive stress.

It is found in the endoplasmic reticulum membrane. The protein resides in the golgi apparatus lumen. The protein localises to the secreted. It localises to the cell projection. Its subcellular location is the dendrite. With respect to regulation, enzyme activity is tightly regulated to prevent the accumulation of reactive oxygen species in the endoplasmic reticulum. Reversibly down-regulated by the formation of disulfide bonds between the active site Cys-94 and Cys-130, and between Cys-99 and Cys-104. Glutathione may be required to regulate its activity in the endoplasmic reticulum. Functionally, oxidoreductase involved in disulfide bond formation in the endoplasmic reticulum. Efficiently reoxidizes P4HB/PDI, the enzyme catalyzing protein disulfide formation, in order to allow P4HB to sustain additional rounds of disulfide formation. Following P4HB reoxidation, passes its electrons to molecular oxygen via FAD, leading to the production of reactive oxygen species (ROS) in the cell. Required for the proper folding of immunoglobulins. Plays an important role in ER stress-induced, CHOP-dependent apoptosis by activating the inositol 1,4,5-trisphosphate receptor IP3R1. This Rattus norvegicus (Rat) protein is ERO1-like protein alpha.